The following is a 289-amino-acid chain: Transcription factor MafA (289 aa).

Over residues 52–73 (STPISTPCSSVPSSPSFCAPSP) the composition is skewed to low complexity. 2 disordered regions span residues 52–87 (STPI…PNAA) and 126–164 (HHHH…HHHH). The segment covering 74–87 (GAQSGVNPSNPNAA) has biased composition (polar residues). Residues 152-164 (GHHHQVHHHHHHH) show a composition bias toward basic residues. Positions 201 to 226 (RLKQKRRTLKNRGYAQSCRYKRVQQR) are basic motif. Residues 201–264 (RLKQKRRTLK…DLYKDKYEKL (64 aa)) form the bZIP domain. A leucine-zipper region spans residues 229–250 (LETEKCQLQSQVEQLKQEVSRL). The tract at residues 266-289 (SRSFTTRESPPQGNPGKANADFFM) is disordered. Residues 267–276 (RSFTTRESPP) show a composition bias toward polar residues.

The protein belongs to the bZIP family. Maf subfamily.

The protein localises to the nucleus. Its function is as follows. Transcription factor, possibly involved in transcription regulation during lens development. The polypeptide is Transcription factor MafA (mafa) (Xenopus tropicalis (Western clawed frog)).